Reading from the N-terminus, the 423-residue chain is E3 ubiquitin-protein ligase makorin-2 (423 aa).

2 consecutive C3H1-type zinc fingers follow at residues 2-29 (STKQVTCRYFLHGVCREGSRCLFSHDLN) and 31-58 (SKPSTICKFYQRGVCAYGERCRYDHIKP). The segment at 59–90 (SSRGGGGGAPEDQAGGGGAGGGGAGIGGAGGG) is disordered. Positions 61–90 (RGGGGGAPEDQAGGGGAGGGGAGIGGAGGG) are enriched in gly residues. The C3H1-type 3 zinc finger occupies 162–189 (QNLPQLCPYAANGHCFYEENCTYLHGDL). The makorin-type Cys-His stretch occupies residues 190–219 (CEVCGLQVLHPHDSEQRRAHEKMCLAAFEA). The RING-type zinc finger occupies 235–289 (CSICMEVVVQKANPSDRRFGILSSCCHTFCLACIRKWRCTRTFSNTIIKSCPECR). The segment at 318–347 (GVSKKACKYFDQGRGSCPFGGKCLYLHAFP) adopts a C3H1-type 4 zinc-finger fold.

The protein localises to the cytoplasm. It localises to the nucleus. It catalyses the reaction S-ubiquitinyl-[E2 ubiquitin-conjugating enzyme]-L-cysteine + [acceptor protein]-L-lysine = [E2 ubiquitin-conjugating enzyme]-L-cysteine + N(6)-ubiquitinyl-[acceptor protein]-L-lysine.. The protein operates within protein modification; protein ubiquitination. Its function is as follows. E3 ubiquitin ligase catalyzing the covalent attachment of ubiquitin moieties onto substrate proteins. Inhibits neurogenesis and axis formation during embryonic development by modulating the phosphatidylinositol 3-kinase (PI3K) pathway. Acts downstream of PI3K and akt1 to up-regulate gsk3b mRNA expression. The chain is E3 ubiquitin-protein ligase makorin-2 (mkrn2) from Seriola quinqueradiata (Five-ray yellowtail).